The sequence spans 158 residues: Deoxyuridine 5'-triphosphate nucleotidohydrolase (158 aa).

Substrate-binding positions include 75 to 77 (RSG), N88, 92 to 94 (TVD), and K102.

The protein belongs to the dUTPase family. Mg(2+) is required as a cofactor.

The catalysed reaction is dUTP + H2O = dUMP + diphosphate + H(+). It participates in pyrimidine metabolism; dUMP biosynthesis; dUMP from dCTP (dUTP route): step 2/2. In terms of biological role, this enzyme is involved in nucleotide metabolism: it produces dUMP, the immediate precursor of thymidine nucleotides and it decreases the intracellular concentration of dUTP so that uracil cannot be incorporated into DNA. This chain is Deoxyuridine 5'-triphosphate nucleotidohydrolase, found in Bifidobacterium longum subsp. infantis (strain ATCC 15697 / DSM 20088 / JCM 1222 / NCTC 11817 / S12).